We begin with the raw amino-acid sequence, 752 residues long: Granule-bound starch synthase 2, chloroplastic/amyloplastic (752 aa).

A chloroplast-targeting transit peptide spans 1 to 57; the sequence is MMLSLGSDATVLPFHAKNLKFTPKLSTLNGDLAFSKGLGVGRLNCGSVRLNHKQHVR. Disordered regions lie at residues 116 to 146 and 224 to 253; these read LEGNGVSYESSEKSLSRDSNPQKGSSSSGSA and FENFEGANEPSSKEVANEAENFESGGEKPP. An ADP-alpha-D-glucose-binding site is contributed by K275.

This sequence belongs to the glycosyltransferase 1 family. Bacterial/plant glycogen synthase subfamily. As to expression, widely expressed.

It is found in the plastid. The protein resides in the chloroplast. It localises to the amyloplast. It catalyses the reaction [(1-&gt;4)-alpha-D-glucosyl](n) + ADP-alpha-D-glucose = [(1-&gt;4)-alpha-D-glucosyl](n+1) + ADP + H(+). Its pathway is glycan biosynthesis; starch biosynthesis. The sequence is that of Granule-bound starch synthase 2, chloroplastic/amyloplastic from Pisum sativum (Garden pea).